Reading from the N-terminus, the 391-residue chain is Succinyl-diaminopimelate desuccinylase (391 aa).

H67 serves as a coordination point for Zn(2+). Residue D69 is part of the active site. D101 provides a ligand contact to Zn(2+). The Proton acceptor role is filled by E135. 3 residues coordinate Zn(2+): E136, E164, and H353.

The protein belongs to the peptidase M20A family. DapE subfamily. As to quaternary structure, homodimer. It depends on Zn(2+) as a cofactor. Co(2+) is required as a cofactor.

The catalysed reaction is N-succinyl-(2S,6S)-2,6-diaminopimelate + H2O = (2S,6S)-2,6-diaminopimelate + succinate. It functions in the pathway amino-acid biosynthesis; L-lysine biosynthesis via DAP pathway; LL-2,6-diaminopimelate from (S)-tetrahydrodipicolinate (succinylase route): step 3/3. In terms of biological role, catalyzes the hydrolysis of N-succinyl-L,L-diaminopimelic acid (SDAP), forming succinate and LL-2,6-diaminopimelate (DAP), an intermediate involved in the bacterial biosynthesis of lysine and meso-diaminopimelic acid, an essential component of bacterial cell walls. The protein is Succinyl-diaminopimelate desuccinylase of Rickettsia bellii (strain RML369-C).